The following is a 539-amino-acid chain: GMP synthase [glutamine-hydrolyzing] (539 aa).

Positions 4–202 (KILILDFGSQ…VLQIAGAKPD (199 aa)) constitute a Glutamine amidotransferase type-1 domain. Cysteine 81 serves as the catalytic Nucleophile. Catalysis depends on residues histidine 176 and glutamate 178. One can recognise a GMPS ATP-PPase domain in the interval 203–395 (WIMKNHIEEA…LGLPPEMVYR (193 aa)). 230–236 (SGGVDSS) lines the ATP pocket.

Homodimer.

It carries out the reaction XMP + L-glutamine + ATP + H2O = GMP + L-glutamate + AMP + diphosphate + 2 H(+). It participates in purine metabolism; GMP biosynthesis; GMP from XMP (L-Gln route): step 1/1. In terms of biological role, catalyzes the synthesis of GMP from XMP. This Burkholderia orbicola (strain AU 1054) protein is GMP synthase [glutamine-hydrolyzing].